The sequence spans 189 residues: Flavin prenyltransferase UbiX (189 aa).

Residues 10–12 (GAS), Ser-37, 88–91 (SIKT), and Arg-123 each bind FMN. The dimethylallyl phosphate site is built by Tyr-153 and Arg-169.

The protein belongs to the UbiX/PAD1 family.

The catalysed reaction is dimethylallyl phosphate + FMNH2 = prenylated FMNH2 + phosphate. The protein operates within cofactor biosynthesis; ubiquinone biosynthesis. Functionally, flavin prenyltransferase that catalyzes the synthesis of the prenylated FMN cofactor (prenyl-FMN) for 4-hydroxy-3-polyprenylbenzoic acid decarboxylase UbiD. The prenyltransferase is metal-independent and links a dimethylallyl moiety from dimethylallyl monophosphate (DMAP) to the flavin N5 and C6 atoms of FMN. This is Flavin prenyltransferase UbiX from Salmonella typhi.